We begin with the raw amino-acid sequence, 359 residues long: Adenosine deaminase (359 aa).

Zn(2+) is bound by residues His-15 and His-17. 3 residues coordinate substrate: His-17, Asp-19, and Gly-184. His-213 contacts Zn(2+). Glu-216 functions as the Proton donor in the catalytic mechanism. Asp-295 contributes to the Zn(2+) binding site. Asp-296 provides a ligand contact to substrate.

The protein belongs to the metallo-dependent hydrolases superfamily. Adenosine and AMP deaminases family. The cofactor is Zn(2+).

It is found in the cell membrane. The protein localises to the cell junction. It localises to the cytoplasmic vesicle lumen. Its subcellular location is the cytoplasm. The protein resides in the lysosome. It catalyses the reaction adenosine + H2O + H(+) = inosine + NH4(+). It carries out the reaction 2'-deoxyadenosine + H2O + H(+) = 2'-deoxyinosine + NH4(+). Functionally, catalyzes the hydrolytic deamination of adenosine and 2-deoxyadenosine. Plays an important role in purine metabolism and in adenosine homeostasis. Modulates signaling by extracellular adenosine, and so contributes indirectly to cellular signaling events. May act as a positive regulator of T-cell coactivation. This Danio rerio (Zebrafish) protein is Adenosine deaminase (ada).